Here is a 693-residue protein sequence, read N- to C-terminus: UvrABC system protein C (693 aa).

The GIY-YIG domain occupies 16-95 (DAPGVYRFRD…IKEFDPRFNV (80 aa)). A UVR domain is found at 208-243 (GVFLRRLESEMAAASAELDFERAARVRDDINALRRV). The disordered stretch occupies residues 656–693 (APSPDDATTEPGAVGEPGTADGAAADPDGRDAVVVPEG). Over residues 672 to 693 (PGTADGAAADPDGRDAVVVPEG) the composition is skewed to low complexity.

The protein belongs to the UvrC family. In terms of assembly, interacts with UvrB in an incision complex.

It localises to the cytoplasm. In terms of biological role, the UvrABC repair system catalyzes the recognition and processing of DNA lesions. UvrC both incises the 5' and 3' sides of the lesion. The N-terminal half is responsible for the 3' incision and the C-terminal half is responsible for the 5' incision. The protein is UvrABC system protein C of Beutenbergia cavernae (strain ATCC BAA-8 / DSM 12333 / CCUG 43141 / JCM 11478 / NBRC 16432 / NCIMB 13614 / HKI 0122).